The sequence spans 470 residues: Aromatic amino acid aminotransferase C569.07 (470 aa).

This sequence belongs to the class-I pyridoxal-phosphate-dependent aminotransferase family. Requires pyridoxal 5'-phosphate as cofactor.

The protein resides in the cytoplasm. It catalyses the reaction an aromatic L-alpha-amino acid + 2-oxoglutarate = an aromatic oxo-acid + L-glutamate. Has aromatic amino acid transaminase activity. The polypeptide is Aromatic amino acid aminotransferase C569.07 (Schizosaccharomyces pombe (strain 972 / ATCC 24843) (Fission yeast)).